Here is a 338-residue protein sequence, read N- to C-terminus: Endonuclease V (338 aa).

Mg(2+) contacts are provided by Asp-52 and Asp-126. A disordered region spans residues 253 to 338 (QLGVAPAQRK…PSPAWVQSPP (86 aa)). Basic and acidic residues-rich tracts occupy residues 260-270 (QRKDRSQKEQR) and 287-323 (RPPE…HQED). A compositionally biased stretch (pro residues) spans 328–338 (PPSPAWVQSPP).

This sequence belongs to the endonuclease V family. As to quaternary structure, monomer. Interacts with PABPC1; the interaction is RNA-dependent and stimulates ENDOV activity. It depends on Mg(2+) as a cofactor. As to expression, highest levels detected in liver with high levels also found in heart, kidney and testis. Expressed at low levels in brain.

It is found in the cytoplasm. The protein localises to the nucleus. Its subcellular location is the nucleolus. The protein resides in the stress granule. Endoribonuclease that specifically cleaves inosine-containing RNAs: cleaves RNA at the second phosphodiester bond 3' to inosine. Active against both single-stranded and double-stranded RNAs. Has strong preference for single-stranded RNAs (ssRNAs) toward double-stranded RNAs (dsRNAs). Cleaves mRNAs and tRNAs containing inosine. Also able to cleave structure-specific dsRNA substrates containing the specific sites 5'-IIUI-3' and 5'-UIUU-3'. Inosine is present in a number of RNAs following editing; the function of inosine-specific endoribonuclease is still unclear: it could either play a regulatory role in edited RNAs, or be involved in antiviral response by removing the hyperedited long viral dsRNA genome that has undergone A-to-I editing. Binds branched DNA structures. The sequence is that of Endonuclease V (Endov) from Mus musculus (Mouse).